We begin with the raw amino-acid sequence, 256 residues long: Small ribosomal subunit protein eS1A (256 aa).

N-acetylalanine; partial is present on A2.

It belongs to the eukaryotic ribosomal protein eS1 family. Component of the small ribosomal subunit. Mature ribosomes consist of a small (40S) and a large (60S) subunit. The 40S subunit contains about 33 different proteins and 1 molecule of RNA (18S). The 60S subunit contains about 49 different proteins and 3 molecules of RNA (25S, 5.8S and 5S).

Its subcellular location is the cytoplasm. The protein is Small ribosomal subunit protein eS1A of Clavispora lusitaniae (strain ATCC 42720) (Yeast).